Consider the following 149-residue polypeptide: Probable flagellum biosynthesis repressor protein FlbT (149 aa).

It belongs to the FlbT family.

Its function is as follows. Has a post-transcriptional repressor function in flagellum biogenesis. Associates with the 5'-UTR of fljK mRNA and promotes its degradation. This Rhizobium leguminosarum bv. trifolii (strain WSM2304) protein is Probable flagellum biosynthesis repressor protein FlbT.